Reading from the N-terminus, the 108-residue chain is Ig kappa chain V region 120 (108 aa).

The framework-1 stretch occupies residues Ala-1–Cys-23. Positions Gln-24–Ala-34 are complementarity-determining-1. The interval Trp-35 to Tyr-49 is framework-2. The complementarity-determining-2 stretch occupies residues Arg-50–Ser-56. A framework-3 region spans residues Gly-57–Cys-88. Positions Gln-89–Ser-97 are complementarity-determining-3. Positions Phe-98 to Lys-107 are framework-4.

This Oryctolagus cuniculus (Rabbit) protein is Ig kappa chain V region 120.